The following is a 313-amino-acid chain: Porphobilinogen deaminase (313 aa).

At Cys-241 the chain carries S-(dipyrrolylmethanemethyl)cysteine.

This sequence belongs to the HMBS family. Monomer. Dipyrromethane serves as cofactor.

The enzyme catalyses 4 porphobilinogen + H2O = hydroxymethylbilane + 4 NH4(+). It functions in the pathway porphyrin-containing compound metabolism; protoporphyrin-IX biosynthesis; coproporphyrinogen-III from 5-aminolevulinate: step 2/4. Its function is as follows. Tetrapolymerization of the monopyrrole PBG into the hydroxymethylbilane pre-uroporphyrinogen in several discrete steps. The sequence is that of Porphobilinogen deaminase from Sulfurimonas denitrificans (strain ATCC 33889 / DSM 1251) (Thiomicrospira denitrificans (strain ATCC 33889 / DSM 1251)).